A 148-amino-acid polypeptide reads, in one-letter code: Putative pre-16S rRNA nuclease (148 aa).

The protein belongs to the YqgF nuclease family.

The protein resides in the cytoplasm. Its function is as follows. Could be a nuclease involved in processing of the 5'-end of pre-16S rRNA. This chain is Putative pre-16S rRNA nuclease, found in Colwellia psychrerythraea (strain 34H / ATCC BAA-681) (Vibrio psychroerythus).